A 158-amino-acid chain; its full sequence is Small ribosomal subunit protein uS19 (158 aa).

It belongs to the universal ribosomal protein uS19 family.

Protein S19 forms a complex with S13 that binds strongly to the 16S ribosomal RNA. The protein is Small ribosomal subunit protein uS19 of Pyrobaculum calidifontis (strain DSM 21063 / JCM 11548 / VA1).